Here is a 166-residue protein sequence, read N- to C-terminus: Deglycase TK1284 (166 aa).

Residues 1-166 enclose the PfpI endopeptidase domain; sequence MKVLILSADG…WMREFVKLLR (166 aa). His-101 is an active-site residue.

It belongs to the peptidase C56 family. In terms of assembly, homohexamer formed by a dimer of trimers that assemble into a hollow ring structure.

The protein localises to the cytoplasm. It catalyses the reaction N(omega)-(1-hydroxy-2-oxopropyl)-L-arginyl-[protein] + H2O = lactate + L-arginyl-[protein] + H(+). The catalysed reaction is N(6)-(1-hydroxy-2-oxopropyl)-L-lysyl-[protein] + H2O = lactate + L-lysyl-[protein] + H(+). The enzyme catalyses S-(1-hydroxy-2-oxopropyl)-L-cysteinyl-[protein] + H2O = lactate + L-cysteinyl-[protein] + H(+). It carries out the reaction N(omega)-(1-hydroxy-2-oxoethyl)-L-arginyl-[protein] + H2O = L-arginyl-[protein] + glycolate + H(+). It catalyses the reaction N(6)-(1-hydroxy-2-oxoethyl)-L-lysyl-[protein] + H2O = glycolate + L-lysyl-[protein] + H(+). The catalysed reaction is S-(1-hydroxy-2-oxoethyl)-L-cysteinyl-[protein] + H2O = glycolate + L-cysteinyl-[protein] + H(+). In terms of biological role, deglycase that catalyzes the deglycation of the Maillard adducts formed between amino groups of proteins and reactive carbonyl groups of glyoxals. Thus, functions as a protein deglycase that repairs methylglyoxal- and glyoxal-glycated proteins, and releases repaired proteins and lactate or glycolate, respectively. Deglycates cysteine, arginine and lysine residues in proteins, and thus reactivates these proteins by reversing glycation by glyoxals. Acts on early glycation intermediates (hemithioacetals and aminocarbinols), preventing the formation of advanced glycation endproducts (AGE) that cause irreversible damage. Also displays proteolytic activity. The sequence is that of Deglycase TK1284 from Thermococcus kodakarensis (strain ATCC BAA-918 / JCM 12380 / KOD1) (Pyrococcus kodakaraensis (strain KOD1)).